The chain runs to 159 residues: Ribosomal RNA large subunit methyltransferase H (159 aa).

Residues Leu-76, Gly-108, and 127-132 each bind S-adenosyl-L-methionine; that span reads FSKMTF.

This sequence belongs to the RNA methyltransferase RlmH family. In terms of assembly, homodimer.

It is found in the cytoplasm. The enzyme catalyses pseudouridine(1915) in 23S rRNA + S-adenosyl-L-methionine = N(3)-methylpseudouridine(1915) in 23S rRNA + S-adenosyl-L-homocysteine + H(+). Specifically methylates the pseudouridine at position 1915 (m3Psi1915) in 23S rRNA. The protein is Ribosomal RNA large subunit methyltransferase H of Bifidobacterium longum subsp. infantis (strain ATCC 15697 / DSM 20088 / JCM 1222 / NCTC 11817 / S12).